The chain runs to 2324 residues: Acetyl-CoA carboxylase (2324 aa).

The residue at position 1 (Met-1) is an N-acetylmethionine. The disordered stretch occupies residues Met-1–Ser-34. Phosphoserine occurs at positions 78 and 80. Residues Val-117–Ala-618 form the Biotin carboxylation domain. Residues Gln-275–Met-466 enclose the ATP-grasp domain. Gly-315–Gly-320 serves as a coordination point for ATP. Positions 424, 437, and 439 each coordinate Mn(2+). Residue Arg-441 is part of the active site. In terms of domain architecture, Biotinyl-binding spans Phe-745–Gln-819. Residue Lys-786 is modified to N6-biotinyllysine. Ser-1193 bears the Phosphoserine mark. Positions Pro-1553 to Lys-1891 constitute a CoA carboxyltransferase N-terminal domain. The interval Pro-1553–Asp-2211 is carboxyltransferase. 3 residues coordinate CoA: Arg-1800, Lys-2104, and Arg-2106. The CoA carboxyltransferase C-terminal domain maps to Pro-1895–Asp-2211.

Biotin is required as a cofactor. Requires Mn(2+) as cofactor.

It is found in the cytoplasm. It catalyses the reaction hydrogencarbonate + acetyl-CoA + ATP = malonyl-CoA + ADP + phosphate + H(+). It carries out the reaction N(6)-biotinyl-L-lysyl-[protein] + hydrogencarbonate + ATP = N(6)-carboxybiotinyl-L-lysyl-[protein] + ADP + phosphate + H(+). Its pathway is lipid metabolism; malonyl-CoA biosynthesis; malonyl-CoA from acetyl-CoA: step 1/1. With respect to regulation, by phosphorylation. Its function is as follows. Catalyzes the rate-limiting reaction in the biogenesis of long-chain fatty acids. Carries out three functions: biotin carboxyl carrier protein, biotin carboxylase and carboxyltransferase. This Gallus gallus (Chicken) protein is Acetyl-CoA carboxylase (ACAC).